The chain runs to 215 residues: Small ribosomal subunit protein eS1 (215 aa).

It belongs to the eukaryotic ribosomal protein eS1 family.

This Thermoplasma volcanium (strain ATCC 51530 / DSM 4299 / JCM 9571 / NBRC 15438 / GSS1) protein is Small ribosomal subunit protein eS1.